We begin with the raw amino-acid sequence, 516 residues long: Keratin, type II cuticular Hb2 (516 aa).

A head region spans residues 1-118 (MSCRNFQLSP…PTVQRVKRDE (118 aa)). One can recognise an IF rod domain in the interval 118–429 (EKEQIKCLNN…RLLEGEEHRL (312 aa)). The tract at residues 119–153 (KEQIKCLNNRFASFINKVRFLEQKNKLLETKWNFM) is coil 1A. The segment at 154–163 (QQQRSCQSNM) is linker 1. The segment at 164-264 (EPLFEGYICA…FEEEIGLLQS (101 aa)) is coil 1B. The interval 265-281 (QISETSVIVKMDNSREL) is linker 12. Residues 282–425 (DVDGIVAEIK…ATYRRLLEGE (144 aa)) are coil 2. Positions 426-516 (EHRLCEGIGP…VGVGSNSCSR (91 aa)) are tail.

Belongs to the intermediate filament family. Heterotetramer of two type I and two type II keratins.

This Mus musculus (Mouse) protein is Keratin, type II cuticular Hb2 (Krt82).